We begin with the raw amino-acid sequence, 94 residues long: Integration host factor subunit beta (94 aa).

This sequence belongs to the bacterial histone-like protein family. In terms of assembly, heterodimer of an alpha and a beta chain.

Functionally, this protein is one of the two subunits of integration host factor, a specific DNA-binding protein that functions in genetic recombination as well as in transcriptional and translational control. This Sodalis glossinidius (strain morsitans) protein is Integration host factor subunit beta.